Here is a 173-residue protein sequence, read N- to C-terminus: Dirigent protein 8 (173 aa).

An N-terminal signal peptide occupies residues 1–22 (MTNLILIFAAQILLFYAVASVG). Residues Asn69, Asn90, and Asn125 are each glycosylated (N-linked (GlcNAc...) asparagine).

Belongs to the plant dirigent protein family. As to quaternary structure, homodimer.

It is found in the secreted. Its subcellular location is the extracellular space. The protein resides in the apoplast. Functionally, dirigent proteins impart stereoselectivity on the phenoxy radical-coupling reaction, yielding optically active lignans from two molecules of coniferyl alcohol in the biosynthesis of lignans, flavonolignans, and alkaloids and thus plays a central role in plant secondary metabolism. The sequence is that of Dirigent protein 8 (DIR8) from Arabidopsis thaliana (Mouse-ear cress).